The sequence spans 584 residues: Interferon regulatory factor 2-binding protein 1 (584 aa).

The disordered stretch occupies residues 60 to 127 (VLPEGRSPGP…SGRLPLPSPA (68 aa)). S66 and S125 each carry phosphoserine. Omega-N-methylarginine is present on R177. Position 186 is a phosphoserine (S186). Residues 197–217 (EKEKQQRNADCLAELNEAMRG) are a coiled coil. K227 participates in a covalent cross-link: Glycyl lysine isopeptide (Lys-Gly) (interchain with G-Cter in SUMO2). The disordered stretch occupies residues 346–420 (PAEALPQQYP…PYSAETPGVP (75 aa)). The segment covering 354 to 369 (YPEPAPAALCGPPPRA) has biased composition (pro residues). S371, S384, S421, and S436 each carry phosphoserine. A disordered region spans residues 433-495 (LGHSPKDPGG…VSGGGSGTGA (63 aa)). K438 participates in a covalent cross-link: Glycyl lysine isopeptide (Lys-Gly) (interchain with G-Cter in SUMO2). The span at 449-463 (AGGASPAASSTAQPP) shows a compositional bias: low complexity. Residues S453 and S457 each carry the phosphoserine modification. An RING-type; degenerate zinc finger spans residues 503 to 550 (CTLCRERLEDTHFVQCPSVPGHKFCFPCSREFIKAQGPAGEVYCPSGD). Residues 503 to 550 (CTLCRERLEDTHFVQCPSVPGHKFCFPCSREFIKAQGPAGEVYCPSGD) are cys-rich.

This sequence belongs to the IRF2BP family. Interacts with IRF2. Part of a corepressor complex containing IRF2 and IRF2BP2. Interacts with JDP2.

Its subcellular location is the nucleus. The catalysed reaction is S-ubiquitinyl-[E2 ubiquitin-conjugating enzyme]-L-cysteine + [acceptor protein]-L-lysine = [E2 ubiquitin-conjugating enzyme]-L-cysteine + N(6)-ubiquitinyl-[acceptor protein]-L-lysine.. Acts as a transcriptional corepressor in a IRF2-dependent manner; this repression is not mediated by histone deacetylase activities. May act as an E3 ligase towards JDP2, enhancing its polyubiquitination. Represses ATF2-dependent transcriptional activation. The chain is Interferon regulatory factor 2-binding protein 1 (IRF2BP1) from Homo sapiens (Human).